The chain runs to 611 residues: Probable potassium transport system protein Kup (611 aa).

A run of 13 helical transmembrane segments spans residues Leu-24–Leu-44, Val-55–Met-75, Val-102–Ile-122, Leu-143–Phe-163, Phe-175–Ala-195, Leu-218–Phe-238, Ala-252–Leu-272, Thr-275–Pro-295, Phe-296–Phe-316, Ile-344–Phe-364, Tyr-374–Leu-394, Leu-400–Val-420, and Ile-423–Ile-443.

This sequence belongs to the HAK/KUP transporter (TC 2.A.72) family.

It localises to the cell membrane. The catalysed reaction is K(+)(in) + H(+)(in) = K(+)(out) + H(+)(out). In terms of biological role, transport of potassium into the cell. Likely operates as a K(+):H(+) symporter. The sequence is that of Probable potassium transport system protein Kup from Methanospirillum hungatei JF-1 (strain ATCC 27890 / DSM 864 / NBRC 100397 / JF-1).